Consider the following 538-residue polypeptide: Chaperonin GroEL 1 (538 aa).

ATP is bound by residues 29-32 (TLGP), 86-90 (DGTTT), Gly413, 478-480 (NAA), and Asp494.

The protein belongs to the chaperonin (HSP60) family. Forms a cylinder of 14 subunits composed of two heptameric rings stacked back-to-back. Interacts with the co-chaperonin GroES.

Its subcellular location is the cytoplasm. It catalyses the reaction ATP + H2O + a folded polypeptide = ADP + phosphate + an unfolded polypeptide.. Its function is as follows. Together with its co-chaperonin GroES, plays an essential role in assisting protein folding. The GroEL-GroES system forms a nano-cage that allows encapsulation of the non-native substrate proteins and provides a physical environment optimized to promote and accelerate protein folding. The polypeptide is Chaperonin GroEL 1 (Corynebacterium glutamicum (strain ATCC 13032 / DSM 20300 / JCM 1318 / BCRC 11384 / CCUG 27702 / LMG 3730 / NBRC 12168 / NCIMB 10025 / NRRL B-2784 / 534)).